The chain runs to 1681 residues: MVYTLFQVHTLKFNRKDYDTLSLFYLNRGYYNELSFRVLERCHEKASARPNDSSTMRTFTDFVSGAPIVRSLQKSTIRKYGYNLAPYMFLLLHVDELSIFSAYQASLPGEKKVDTERLKRDLCPRKPTEIKYFSQICNDMMNKKDRLGDILHIILRACALNFGAGPRGGAGDEEDRSITNEEPIIPSVDEHGLKVCKLRSPNTPRRLRKTLDAVKALLVSSCACTARDLDIFDDNNGVAMWKWIKILYHEVAQETALKDSYRITLVPSSDGVSVCGKLFNREYVRGFYFACKAQFDNLWEELNDCFYMPTVVDIASLILRNREVLFREPKRGIDEYLENDSFLQMIPVKYREIVLPKLRRDTNKMTAALKNKVTVAIDELTVPLMWMIHFAVGYPYRYPELQLLAFAGPQRNVYVDDTTRRIQLYTDYNKNGSSEPRLKTLDGLTSDYVFYFVTVLRQMQICALGNSYDAFNHDPWMDVVGFEDPDQVTNRDISRIVLYSYMFLNTAKGCLVEYATFRQYMRELPKNAPQKLNFREMRQGLIALGRHCVGSRFETDLYESATSELMANHSVQTGRNIYGVDSFSLTSVSGTTATLLQERASERWIQWLGLESDYHCSFSSTRNAEDVVAGEAASSDHHQKISRVTRKRPREPKSTNDILVAGQKLFGSSFEFRDLHQLRLCHEIYMADTPSVAVQAPPGYGKTELFHLPLIALASKGDVKYVSFLFVPYTVLLANCMIRLSRCGCLNVAPVRNFIEEGCDGVTDLYVGIYDDLASTNFTDRIAAWENIVECTFRTNNVKLGYLIVDEFHNFETEVYRQSQFGGITNLDFDAFEKAIFLSGTAPEAVADAALQRIGLTGLAKKSMDINELKRSEDLSRGLSSYPTRMFNLIKEKSEVPLGHVHKIWKKVESQPEEALKLLLALFEIEPESKAIVVASTTNEVEELACSWRKYFRVVWIHGKLGAAEKVSRTKEFVTDGSMRVLIGTKLVTEGIDIKQLMMVIMLDNRLNIIELIQGVGRLRDGGLCYLLSRKNSWAARNRKGELPPIKEGCITEQVREFYGLESKKGKKGQHVGCCGSRTDLSADTVELIERMDRLAEKQATASMSIVALPSSFQESNSSDRCRKYCSSDEDSDTCIHGSANASTNATTNSSTNATTTASTNVRTSATTTASINVRTSATTTESTNSSTNATTTASTNVRTSATTTASINVRTSATTTESTNSNTSATTTESTDSNTSATTTESTDSNTSATTTASTNSSTNATTTASTNSSTNATTTESTNASAKEDANKDGNAEDNRFHPVTDINKESYKRKGSQMVLLERKKLKAQFPNTSENMNVLQFLGFRSDEIKHLFLYGIDVYFCPEGVFTQYGLCKGCQKMFELCVCWAGQKVSYRRMAWEALAVERMLRNDEEYKEYLEDIEPYHGDPVGYLKYFSVKRGEIYSQIQRNYAWYLAITRRRETISVLDSTRGKQGSQVFRMSGRQIKELYYKVWSNLRESKTEVLQYFLNWDEKKCREEWEAKDDTVFVEALEKVGVFQRLRSMTSAGLQGPQYVKLQFSRHHRQLRSRYELSLGMHLRDQLALGVTPSKVPHWTAFLSMLIGLFCNKTFRQKLEYLLEQISEVWLLPHWLDLANVEVLAADNTRVPLYMLMVAVHKELDSDDVPDGRFDILLCRDSSREVGE.

The 178-residue stretch at 683 to 860 (EIYMADTPSV…LQRIGLTGLA (178 aa)) folds into the Helicase ATP-binding domain. An ATP-binding site is contributed by 696 to 703 (APPGYGKT). Positions 917-1066 (KLLLALFEIE…EFYGLESKKG (150 aa)) constitute a Helicase C-terminal domain. The span at 1140-1283 (ANASTNATTN…ATTTESTNAS (144 aa)) shows a compositional bias: low complexity. A disordered region spans residues 1140–1307 (ANASTNATTN…RFHPVTDINK (168 aa)). Over residues 1284–1307 (AKEDANKDGNAEDNRFHPVTDINK) the composition is skewed to basic and acidic residues.

Belongs to the helicase family. Yeast subtelomeric Y' repeat subfamily.

Functionally, catalyzes DNA unwinding and is involved in telomerase-independent telomere maintenance. The sequence is that of Y' element ATP-dependent helicase protein 1 copy 2 (YRF1-2) from Saccharomyces cerevisiae (strain ATCC 204508 / S288c) (Baker's yeast).